The chain runs to 162 residues: Non-specific lipid transfer protein GPI-anchored 27 (162 aa).

Residues 1 to 29 form the signal peptide; the sequence is MAYTNKVAVAVGAAVVFLAVVMNPRWTEA. Disulfide bonds link Cys-39-Cys-78, Cys-50-Cys-62, Cys-63-Cys-102, and Cys-76-Cys-110. Asn-68 carries N-linked (GlcNAc...) asparagine glycosylation. Residues Asn-124 and Asn-135 are each glycosylated (N-linked (GlcNAc...) asparagine). A lipid anchor (GPI-anchor amidated serine) is attached at Ser-137. Positions 138-162 are cleaved as a propeptide — removed in mature form; it reads VGGKNKVATSMSAFGLVAILLFVMF.

This sequence belongs to the plant LTP family.

It is found in the cell membrane. Its function is as follows. Probable lipid transfer protein. In Arabidopsis thaliana (Mouse-ear cress), this protein is Non-specific lipid transfer protein GPI-anchored 27.